Here is a 715-residue protein sequence, read N- to C-terminus: ATP-dependent zinc metalloprotease YME1L1 (715 aa).

Residues 1 to 237 (MFSLSSTVQP…TNDSLRRTRL (237 aa)) lie on the Mitochondrial matrix side of the membrane. The tract at residues 34–54 (NTPVSQKQHRDTVPEHEAPSS) is disordered. The segment covering 41–52 (QHRDTVPEHEAP) has biased composition (basic and acidic residues). A helical transmembrane segment spans residues 238 to 258 (ILFVLLLFGIYGLLKNPFLSV). Over 259–715 (RFRTTTGLDS…VLEGKKLEVR (457 aa)) the chain is Mitochondrial intermembrane. Residues Val-283, Thr-325, Gly-326, Lys-327, Thr-328, and Leu-329 each coordinate ATP. Position 541 (His-541) interacts with Zn(2+). Glu-542 is a catalytic residue. Residues His-545 and Asp-619 each coordinate Zn(2+).

This sequence in the N-terminal section; belongs to the AAA ATPase family. It in the C-terminal section; belongs to the peptidase M41 family. In terms of assembly, homohexamer; may also form heterohexamers. Exists in several complexes of 600-1100 kDa. Interacts with AFG1L. Requires Zn(2+) as cofactor. Proteolytically processed by mitochondrial processing peptidase (MPP) to generate the mature form. Degraded in an OMA1-dependent manner in response to oxidative stress. Detected in heart and skeletal muscle (at protein level).

It is found in the mitochondrion inner membrane. It localises to the mitochondrion. It catalyses the reaction ATP + H2O = ADP + phosphate + H(+). ATP-dependent metalloprotease that catalyzes the degradation of folded and unfolded proteins with a suitable degron sequence in the mitochondrial intermembrane region. Plays an important role in regulating mitochondrial morphology and function by cleaving OPA1 at position S2, giving rise to a form of OPA1 that promotes maintenance of normal mitochondrial structure and mitochondrial protein metabolism. Ensures cell proliferation, maintains normal cristae morphology and complex I respiration activity, promotes antiapoptotic activity and protects mitochondria from the accumulation of oxidatively damaged membrane proteins. Required to control the accumulation of nonassembled respiratory chain subunits (NDUFB6, OX4 and ND1). Involved in the mitochondrial adaptation in response to various signals, such as stress or developmental cues, by mediating degradation of mitochondrial proteins to rewire the mitochondrial proteome. Catalyzes degradation of mitochondrial proteins, such as translocases, lipid transfer proteins and metabolic enzymes in response to nutrient starvation in order to limit mitochondrial biogenesis: mechanistically, YME1L is activated by decreased phosphatidylethanolamine levels caused by LPIN1 activity in response to mTORC1 inhibition. Acts as a regulator of adult neural stem cell self-renewal by promoting mitochondrial proteome rewiring, preserving neural stem and progenitor cells self-renewal. Required for normal, constitutive degradation of PRELID1. Catalyzes the degradation of OMA1 in response to membrane depolarization. Mediates degradation of TIMM17A downstream of the integrated stress response (ISR). Catalyzes degradation of MICU1 when MICU1 is not assembled via an interchain disulfide. The polypeptide is ATP-dependent zinc metalloprotease YME1L1 (Yme1l1) (Mus musculus (Mouse)).